Consider the following 425-residue polypeptide: UDP-N-acetylglucosamine 1-carboxyvinyltransferase (425 aa).

Position 23–24 (23–24 (KN)) interacts with phosphoenolpyruvate. Position 100 (R100) interacts with UDP-N-acetyl-alpha-D-glucosamine. The Proton donor role is filled by C124. C124 is subject to 2-(S-cysteinyl)pyruvic acid O-phosphothioketal. UDP-N-acetyl-alpha-D-glucosamine contacts are provided by residues 169–172 (KVSV), D313, and V335.

Belongs to the EPSP synthase family. MurA subfamily.

The protein resides in the cytoplasm. It carries out the reaction phosphoenolpyruvate + UDP-N-acetyl-alpha-D-glucosamine = UDP-N-acetyl-3-O-(1-carboxyvinyl)-alpha-D-glucosamine + phosphate. It functions in the pathway cell wall biogenesis; peptidoglycan biosynthesis. In terms of biological role, cell wall formation. Adds enolpyruvyl to UDP-N-acetylglucosamine. This is UDP-N-acetylglucosamine 1-carboxyvinyltransferase from Wolbachia pipientis subsp. Culex pipiens (strain wPip).